The chain runs to 61 residues: Metallothionein-2 (61 aa).

Residue methionine 1 is modified to N-acetylmethionine. Residues 1–29 (MDPNCSCVAGDSCTCAGSCKCKECKCTSC) form a beta region. Cysteine 5, cysteine 7, cysteine 13, cysteine 15, cysteine 19, cysteine 21, cysteine 24, cysteine 26, cysteine 29, cysteine 33, cysteine 34, cysteine 36, cysteine 37, cysteine 41, cysteine 44, cysteine 48, cysteine 50, cysteine 57, cysteine 59, and cysteine 60 together coordinate a divalent metal cation. An antigenic epitope region spans residues 20–25 (KCKECK). The tract at residues 30–61 (KKSCCSCCPVGCAKCAQGCICKGASDKCNCCA) is alpha.

Belongs to the metallothionein superfamily. Type 1 family.

In terms of biological role, metallothioneins have a high content of cysteine residues that bind various heavy metals; these proteins are transcriptionally regulated by both heavy metals and glucocorticoids. The sequence is that of Metallothionein-2 (MT2) from Macaca fascicularis (Crab-eating macaque).